Here is a 177-residue protein sequence, read N- to C-terminus: ATP synthase subunit b (177 aa).

Residues 19–39 (LFPNLPNFIAHVIATIVLVVI) traverse the membrane as a helical segment.

It belongs to the ATPase B chain family. In terms of assembly, F-type ATPases have 2 components, F(1) - the catalytic core - and F(0) - the membrane proton channel. F(1) has five subunits: alpha(3), beta(3), gamma(1), delta(1), epsilon(1). F(0) has three main subunits: a(1), b(2) and c(10-14). The alpha and beta chains form an alternating ring which encloses part of the gamma chain. F(1) is attached to F(0) by a central stalk formed by the gamma and epsilon chains, while a peripheral stalk is formed by the delta and b chains.

Its subcellular location is the cell membrane. Functionally, f(1)F(0) ATP synthase produces ATP from ADP in the presence of a proton or sodium gradient. F-type ATPases consist of two structural domains, F(1) containing the extramembraneous catalytic core and F(0) containing the membrane proton channel, linked together by a central stalk and a peripheral stalk. During catalysis, ATP synthesis in the catalytic domain of F(1) is coupled via a rotary mechanism of the central stalk subunits to proton translocation. In terms of biological role, component of the F(0) channel, it forms part of the peripheral stalk, linking F(1) to F(0). This is ATP synthase subunit b from Mesoplasma florum (strain ATCC 33453 / NBRC 100688 / NCTC 11704 / L1) (Acholeplasma florum).